The following is a 360-amino-acid chain: Phospho-N-acetylmuramoyl-pentapeptide-transferase (360 aa).

10 helical membrane-spanning segments follow: residues 18 to 38 (VFSY…MMSL), 73 to 93 (TMGG…WADL), 97 to 117 (YVWA…VDDY), 135 to 155 (FWQS…STQA), 168 to 188 (VLPQ…VGTS), 199 to 219 (GLAI…AYLT), 236 to 256 (ASEL…FLWF), 263 to 283 (VFMG…IAVL), 288 to 308 (LLLI…ILQV), and 339 to 359 (IVRF…TLKI).

This sequence belongs to the glycosyltransferase 4 family. MraY subfamily. Mg(2+) is required as a cofactor.

It is found in the cell inner membrane. The catalysed reaction is UDP-N-acetyl-alpha-D-muramoyl-L-alanyl-gamma-D-glutamyl-meso-2,6-diaminopimeloyl-D-alanyl-D-alanine + di-trans,octa-cis-undecaprenyl phosphate = di-trans,octa-cis-undecaprenyl diphospho-N-acetyl-alpha-D-muramoyl-L-alanyl-D-glutamyl-meso-2,6-diaminopimeloyl-D-alanyl-D-alanine + UMP. The protein operates within cell wall biogenesis; peptidoglycan biosynthesis. In terms of biological role, catalyzes the initial step of the lipid cycle reactions in the biosynthesis of the cell wall peptidoglycan: transfers peptidoglycan precursor phospho-MurNAc-pentapeptide from UDP-MurNAc-pentapeptide onto the lipid carrier undecaprenyl phosphate, yielding undecaprenyl-pyrophosphoryl-MurNAc-pentapeptide, known as lipid I. This chain is Phospho-N-acetylmuramoyl-pentapeptide-transferase, found in Pseudoalteromonas translucida (strain TAC 125).